The sequence spans 197 residues: UPF0301 protein AnaeK_4073 (197 aa).

It belongs to the UPF0301 (AlgH) family.

In Anaeromyxobacter sp. (strain K), this protein is UPF0301 protein AnaeK_4073.